Here is a 363-residue protein sequence, read N- to C-terminus: uncharacterized protein (363 aa).

Residues 109 to 329 (RAALRELRSR…VEELQAQTRE (221 aa)) are a coiled coil.

This is an uncharacterized protein from Homo sapiens (Human).